Consider the following 74-residue polypeptide: Large ribosomal subunit protein bL28 (74 aa).

It belongs to the bacterial ribosomal protein bL28 family.

The sequence is that of Large ribosomal subunit protein bL28 from Desulforapulum autotrophicum (strain ATCC 43914 / DSM 3382 / VKM B-1955 / HRM2) (Desulfobacterium autotrophicum).